Reading from the N-terminus, the 598-residue chain is Serine hydroxymethyltransferase 7 (598 aa).

The segment at 57-85 is disordered; it reads QLLEQKAEKTTTVDEPKKDGGGGGDQKED. The span at 61-85 shows a compositional bias: basic and acidic residues; that stretch reads QKAEKTTTVDEPKKDGGGGGDQKED. K370 carries the post-translational modification N6-(pyridoxal phosphate)lysine.

Belongs to the SHMT family. In terms of assembly, homotetramer. It depends on pyridoxal 5'-phosphate as a cofactor.

The protein resides in the cytoplasm. It catalyses the reaction (6R)-5,10-methylene-5,6,7,8-tetrahydrofolate + glycine + H2O = (6S)-5,6,7,8-tetrahydrofolate + L-serine. Its pathway is one-carbon metabolism; tetrahydrofolate interconversion. In terms of biological role, catalyzes the interconversion of serine and glycine. The polypeptide is Serine hydroxymethyltransferase 7 (SHM7) (Arabidopsis thaliana (Mouse-ear cress)).